We begin with the raw amino-acid sequence, 499 residues long: Laccase (499 aa).

Plastocyanin-like domains are found at residues valine 2 to tyrosine 127 and valine 139 to tyrosine 281. 2 N-linked (GlcNAc...) asparagine glycosylation sites follow: asparagine 51 and asparagine 54. Cu cation-binding residues include histidine 64, histidine 66, histidine 109, and histidine 111. Disulfide bonds link cysteine 85–cysteine 488 and cysteine 117–cysteine 205. Tyrosine 196 is subject to 3'-nitrotyrosine. N-linked (GlcNAc...) asparagine glycans are attached at residues asparagine 208, asparagine 217, asparagine 292, and asparagine 333. The Plastocyanin-like 3 domain occupies serine 348–aspartate 470. At tyrosine 372 the chain carries 3'-nitrotyrosine. A glycan (N-linked (GlcNAc...) asparagine) is linked at asparagine 377. Positions 395, 398, and 400 each coordinate Cu cation. N-linked (GlcNAc...) asparagine glycans are attached at residues asparagine 416 and asparagine 436. Residues histidine 452, cysteine 453, histidine 454, and histidine 458 each contribute to the Cu cation site.

It belongs to the multicopper oxidase family. Requires Cu cation as cofactor.

Its subcellular location is the secreted. It carries out the reaction 4 hydroquinone + O2 = 4 benzosemiquinone + 2 H2O. Lignin degradation and detoxification of lignin-derived products. The sequence is that of Laccase from Trametes maxima (White-rot fungus).